The chain runs to 248 residues: MLYLHDVWVNWFEGEENGYNVCHFYEWRKDDTIELLDQVPLLKVDATLYHYIENELLELPQKMLEDVHHKAYIRKNHERLQQEYCFVVTDGKGIIAIDTIGYNVPIRKSRLIPRQEQMVYEMVENVQAEKYEFQVEETEKEHHILSPSPFIMNGLTRKERQLKQLLFMALDQLHTTKNTAEIRYWFTEWDPSAYGMVQHMEFEDIWAKLYDEAKTGWSDKHEQLCERLVKGQPFFEKLWEMENEQKVN.

The protein belongs to the UPF0736 family.

The chain is UPF0736 protein BCB4264_A1231 from Bacillus cereus (strain B4264).